The following is a 798-amino-acid chain: uncharacterized protein (798 aa).

The tract at residues 432–573 (KLTDNLSNKS…KNKAYRGRRV (142 aa)) is disordered. 4 stretches are compositionally biased toward low complexity: residues 438–449 (SNKSSNDNTSET), 456–465 (RSSNSRNSDN), 473–487 (SKTQ…SRIP), and 495–510 (STNS…SDVY). The span at 519-529 (PSRSTYKSRTI) shows a compositional bias: polar residues. The span at 535-547 (ESSPVSSRTSSPV) shows a compositional bias: low complexity. The span at 548–562 (DDSRLKQSRISEDKP) shows a compositional bias: basic and acidic residues. Positions 563-572 (RKNKAYRGRR) are enriched in basic residues.

The protein resides in the virion. This is an uncharacterized protein from Acanthamoeba polyphaga (Amoeba).